The following is a 367-amino-acid chain: Protein RecA (367 aa).

Residue 73 to 80 (GPESSGKT) participates in ATP binding. The segment at 345 to 367 (DEPVAKKASAKESKEAKELKEVE) is disordered.

The protein belongs to the RecA family.

The protein localises to the cytoplasm. In terms of biological role, can catalyze the hydrolysis of ATP in the presence of single-stranded DNA, the ATP-dependent uptake of single-stranded DNA by duplex DNA, and the ATP-dependent hybridization of homologous single-stranded DNAs. It interacts with LexA causing its activation and leading to its autocatalytic cleavage. This chain is Protein RecA, found in Herminiimonas arsenicoxydans.